Reading from the N-terminus, the 68-residue chain is DNA-directed RNA polymerase subunit Rpo10 (68 aa).

Positions 7, 10, 44, and 45 each coordinate Zn(2+).

Belongs to the archaeal Rpo10/eukaryotic RPB10 RNA polymerase subunit family. In terms of assembly, part of the RNA polymerase complex. It depends on Zn(2+) as a cofactor.

It is found in the cytoplasm. The catalysed reaction is RNA(n) + a ribonucleoside 5'-triphosphate = RNA(n+1) + diphosphate. DNA-dependent RNA polymerase (RNAP) catalyzes the transcription of DNA into RNA using the four ribonucleoside triphosphates as substrates. In Methanococcus maripaludis (strain C5 / ATCC BAA-1333), this protein is DNA-directed RNA polymerase subunit Rpo10.